The following is a 782-amino-acid chain: Nucleolar RNA helicase 2 (782 aa).

Positions 1–184 (MPGKLRSASK…IPVEQKEGAF (184 aa)) are disordered. S7 and S13 each carry phosphoserine. Basic and acidic residues-rich tracts occupy residues 26 to 42 (PSEKKTRKEKPKSKTDE) and 99 to 117 (EPLEKKAPSAKTKEMKAEE). Residue K39 is modified to N6-acetyllysine. A Glycyl lysine isopeptide (Lys-Gly) (interchain with G-Cter in SUMO1); alternate cross-link involves residue K114. Residue K114 forms a Glycyl lysine isopeptide (Lys-Gly) (interchain with G-Cter in SUMO2); alternate linkage. S119 is subject to Phosphoserine. Positions 134-143 (GKEANGDVGE) are enriched in basic and acidic residues. K135 is modified (N6-acetyllysine). 2 positions are modified to phosphoserine: S145 and S169. Over residues 172–181 (EKEIPVEQKE) the composition is skewed to basic and acidic residues. The Q motif motif lies at 182 to 210 (GAFSNFPISEETVKLLKARGVNFLFPIQA). Positions 213–392 (FHHVYSGKDL…KKYMKSTYEQ (180 aa)) constitute a Helicase ATP-binding domain. Position 226-233 (226-233 (ARTGTGKT)) interacts with ATP. At T292 the chain carries Phosphothreonine. A DEAD box motif is present at residues 335–338 (DEVD). One can recognise a Helicase C-terminal domain in the interval 425 to 569 (DVIRVYSGHQ…GVPSATEIIK (145 aa)). Phosphoserine is present on S563. K596 carries the post-translational modification N6-acetyllysine. Positions 704-782 (ATEQPELEGP…KRSFSKAFGQ (79 aa)) are disordered. 3 tandem repeats follow at residues 720-724 (GRGQR), 731-735 (FRGQR), and 741-747 (FRGQGQR). Residues 720–747 (GRGQRDGSRGSFRGQRGGSRNFRGQGQR) form a 3 X 5 AA repeats region. A compositionally biased stretch (low complexity) spans 728-756 (RGSFRGQRGGSRNFRGQGQRGGSRNFRGQ). Residue K778 is modified to N6-acetyllysine.

Belongs to the DEAD box helicase family. DDX21/DDX50 subfamily. In terms of assembly, homodimer; homodimerizes via its N-terminus. Found in a multi-helicase-TICAM1 complex at least composed of DHX36, DDX1, DDX21 and TICAM1; this complex exists in resting cells with or without poly(I:C) RNA ligand stimulation. Interacts (via C-terminus) with TICAM1 (via TIR domain). Interacts with DHX36 (via C-terminus); this interaction serves as bridges to TICAM1. Interacts (via C-terminus) with DDX1 (via B30.2/SPRY domain); this interaction serves as bridges to TICAM1. Component of the B-WICH complex, at least composed of SMARCA5/SNF2H, BAZ1B/WSTF, SF3B1, DEK, MYO1C, ERCC6, MYBBP1A and DDX21. Interacts with C1QBP. Interacts with JUN. Interacts with WDR46. Interacts with MCM3AP. Interacts with WDR43. Interacts with KPNA3. Interacts with GID4. In terms of processing, acetylation by CREBBP/CBP inhibits the helicase activity. Deacetylation by SIRT7 promotes the helicase activity and overcomes R-loop-mediated stalling of RNA polymerases.

The protein localises to the nucleus. It localises to the nucleolus. The protein resides in the nucleoplasm. It is found in the cytoplasm. Its subcellular location is the cytosol. The protein localises to the mitochondrion. The catalysed reaction is ATP + H2O = ADP + phosphate + H(+). With respect to regulation, acetylation inhibits the helicase activity. RNA helicase that acts as a sensor of the transcriptional status of both RNA polymerase (Pol) I and II: promotes ribosomal RNA (rRNA) processing and transcription from polymerase II (Pol II). Binds various RNAs, such as rRNAs, snoRNAs, 7SK and, at lower extent, mRNAs. In the nucleolus, localizes to rDNA locus, where it directly binds rRNAs and snoRNAs, and promotes rRNA transcription, processing and modification. Required for rRNA 2'-O-methylation, possibly by promoting the recruitment of late-acting snoRNAs SNORD56 and SNORD58 with pre-ribosomal complexes. In the nucleoplasm, binds 7SK RNA and is recruited to the promoters of Pol II-transcribed genes: acts by facilitating the release of P-TEFb from inhibitory 7SK snRNP in a manner that is dependent on its helicase activity, thereby promoting transcription of its target genes. Functions as a cofactor for JUN-activated transcription: required for phosphorylation of JUN at 'Ser-77'. Can unwind double-stranded RNA (helicase) and can fold or introduce a secondary structure to a single-stranded RNA (foldase). Together with SIRT7, required to prevent R-loop-associated DNA damage and transcription-associated genomic instability: deacetylation by SIRT7 activates the helicase activity, thereby overcoming R-loop-mediated stalling of RNA polymerases. Involved in rRNA processing. May bind to specific miRNA hairpins. Component of a multi-helicase-TICAM1 complex that acts as a cytoplasmic sensor of viral double-stranded RNA (dsRNA) and plays a role in the activation of a cascade of antiviral responses including the induction of pro-inflammatory cytokines via the adapter molecule TICAM1. This Rattus norvegicus (Rat) protein is Nucleolar RNA helicase 2 (Ddx21).